The following is a 280-amino-acid chain: MVVKVGIAKLGNIASGVMGELLLDERADREDMITFMATSGTKLQPEDIERVVSNMKAWGPDFCIVVSPNGVLPGPTQAREDLAAAGIPCIVITDDVTTKKEQFEALKASNFGYIIMKADAMIGARREFLDPIEMADYNGNLVKVLALTGAFRKMQMELDKVIDQVKAGKKGADLALPKVVMTSDKAVDGEFSNPYALAKARAAYEIAQSVAGVNVKGCFMTKEWEKYIPIVASAHEMMRQAMLLCEEARTLEKGVDAVIRKPHKKTGEIVSKTALISKPE.

It belongs to the MTD family.

It carries out the reaction 5,10-methylenetetrahydromethanopterin + oxidized coenzyme F420-(gamma-L-Glu)(n) + 2 H(+) = 5,10-methenyl-5,6,7,8-tetrahydromethanopterin + reduced coenzyme F420-(gamma-L-Glu)(n). Its pathway is one-carbon metabolism; methanogenesis from CO(2); 5,10-methylene-5,6,7,8-tetrahydromethanopterin from 5,10-methenyl-5,6,7,8-tetrahydromethanopterin (coenzyme F420 route): step 1/1. Its function is as follows. Catalyzes the reversible reduction of methenyl-H(4)MPT(+) to methylene-H(4)MPT. This chain is F420-dependent methylenetetrahydromethanopterin dehydrogenase, found in Methanoculleus marisnigri (strain ATCC 35101 / DSM 1498 / JR1).